A 134-amino-acid chain; its full sequence is Large ribosomal subunit protein uL24 (134 aa).

This sequence belongs to the universal ribosomal protein uL24 family. Part of the 50S ribosomal subunit.

In terms of biological role, one of two assembly initiator proteins, it binds directly to the 5'-end of the 23S rRNA, where it nucleates assembly of the 50S subunit. Its function is as follows. Located at the polypeptide exit tunnel on the outside of the subunit. The chain is Large ribosomal subunit protein uL24 from Sulfolobus acidocaldarius (strain ATCC 33909 / DSM 639 / JCM 8929 / NBRC 15157 / NCIMB 11770).